Here is a 515-residue protein sequence, read N- to C-terminus: 3-[(3aS,4S,7aS)-7a-methyl-1,5-dioxo-octahydro-1H-inden-4-yl]propanoyl:CoA ligase (515 aa).

Residues 185–193 (TSGTTGRSK), aspartate 398, arginine 413, and lysine 504 each bind ATP.

This sequence belongs to the ATP-dependent AMP-binding enzyme family.

The catalysed reaction is 3-[(3aS,4S,7aS)-7a-methyl-1,5-dioxo-octahydro-1H-inden-4-yl]propanoate + ATP + CoA = 3-[(3aS,4S,7aS)-7a-methyl-1,5-dioxo-octahydro-1H-inden-4-yl]propanoyl-CoA + AMP + diphosphate. Functionally, involved in the catabolism of the rings C and D of cholesterol. Catalyzes the ATP-dependent CoA thioesterification of 3aalpha-H-4alpha(3'-propanoate)-7abeta-methylhexahydro-1,5-indanedione (HIP). The sequence is that of 3-[(3aS,4S,7aS)-7a-methyl-1,5-dioxo-octahydro-1H-inden-4-yl]propanoyl:CoA ligase from Rhodococcus jostii (strain RHA1).